A 170-amino-acid chain; its full sequence is Photosystem II extrinsic protein V (170 aa).

An N-terminal signal peptide occupies residues 1–33 (MASLFASLGRSLIKLLIVLPVIIGLSISSPAMA). Heme c is bound by residues Cys-70, Cys-73, His-74, and His-125.

The protein belongs to the cytochrome c family. PsbV subfamily. PSII is composed of 1 copy each of membrane proteins PsbA, PsbB, PsbC, PsbD, PsbE, PsbF, PsbH, PsbI, PsbJ, PsbK, PsbL, PsbM, PsbT, PsbX, PsbY, Psb30/Ycf12, peripheral proteins PsbO, CyanoQ (PsbQ), PsbU, PsbV and a large number of cofactors. It forms dimeric complexes. Requires heme c as cofactor.

The protein resides in the cellular thylakoid membrane. Its function is as follows. One of the extrinsic, lumenal subunits of photosystem II (PSII). PSII is a light-driven water plastoquinone oxidoreductase, using light energy to abstract electrons from H(2)O, generating a proton gradient subsequently used for ATP formation. The extrinsic proteins stabilize the structure of photosystem II oxygen-evolving complex (OEC), the ion environment of oxygen evolution and protect the OEC against heat-induced inactivation. Low-potential cytochrome c that plays a role in the OEC of PSII. This chain is Photosystem II extrinsic protein V, found in Prochlorococcus marinus (strain MIT 9313).